Consider the following 201-residue polypeptide: uncharacterized protein (201 aa).

This is an uncharacterized protein from Lepidoptera (butterflies and moths).